A 183-amino-acid chain; its full sequence is SsrA-binding protein (183 aa).

The interval 1–27 (MAKKATLVDHGAAKGKKKAQSKVSKKN) is disordered. Positions 13 to 27 (AKGKKKAQSKVSKKN) are enriched in basic residues.

The protein belongs to the SmpB family.

The protein localises to the cytoplasm. Its function is as follows. Required for rescue of stalled ribosomes mediated by trans-translation. Binds to transfer-messenger RNA (tmRNA), required for stable association of tmRNA with ribosomes. tmRNA and SmpB together mimic tRNA shape, replacing the anticodon stem-loop with SmpB. tmRNA is encoded by the ssrA gene; the 2 termini fold to resemble tRNA(Ala) and it encodes a 'tag peptide', a short internal open reading frame. During trans-translation Ala-aminoacylated tmRNA acts like a tRNA, entering the A-site of stalled ribosomes, displacing the stalled mRNA. The ribosome then switches to translate the ORF on the tmRNA; the nascent peptide is terminated with the 'tag peptide' encoded by the tmRNA and targeted for degradation. The ribosome is freed to recommence translation, which seems to be the essential function of trans-translation. The protein is SsrA-binding protein of Corynebacterium kroppenstedtii (strain DSM 44385 / JCM 11950 / CIP 105744 / CCUG 35717).